Reading from the N-terminus, the 828-residue chain is Molybdenum cofactor sulfurase (828 aa).

Lys-239 is subject to N6-(pyridoxal phosphate)lysine. Residue Cys-402 is part of the active site. The tract at residues 638–682 is disordered; the sequence is TRYTRRSLHSRSSTAALRRQRPVEESSMPGSFPSDTPLSRTPEPP. In terms of domain architecture, MOSC spans 652-825; the sequence is AALRRQRPVE…VMVGDVVRPW (174 aa).

The protein belongs to the class-V pyridoxal-phosphate-dependent aminotransferase family. MOCOS subfamily. Pyridoxal 5'-phosphate is required as a cofactor.

It catalyses the reaction Mo-molybdopterin + L-cysteine + AH2 = thio-Mo-molybdopterin + L-alanine + A + H2O. Its function is as follows. Sulfurates the molybdenum cofactor. Sulfation of molybdenum is essential for xanthine dehydrogenase (XDH) and aldehyde oxidase (ADO) enzymes in which molybdenum cofactor is liganded by 1 oxygen and 1 sulfur atom in active form. The protein is Molybdenum cofactor sulfurase of Aspergillus terreus (strain NIH 2624 / FGSC A1156).